We begin with the raw amino-acid sequence, 448 residues long: N-succinylarginine dihydrolase (448 aa).

Residues 19–28, Asn110, and 137–138 each bind substrate; these read AGLSSGNIAS and HR. The active site involves Glu174. Arg216 is a substrate binding site. His252 is an active-site residue. Residues Asp254 and Asn366 each contribute to the substrate site. The active-site Nucleophile is Cys372.

This sequence belongs to the succinylarginine dihydrolase family. In terms of assembly, homodimer.

The catalysed reaction is N(2)-succinyl-L-arginine + 2 H2O + 2 H(+) = N(2)-succinyl-L-ornithine + 2 NH4(+) + CO2. Its pathway is amino-acid degradation; L-arginine degradation via AST pathway; L-glutamate and succinate from L-arginine: step 2/5. Functionally, catalyzes the hydrolysis of N(2)-succinylarginine into N(2)-succinylornithine, ammonia and CO(2). This is N-succinylarginine dihydrolase from Legionella pneumophila (strain Lens).